The chain runs to 487 residues: Glycogen synthase (487 aa).

Residue Lys23 participates in ADP-alpha-D-glucose binding.

It belongs to the glycosyltransferase 1 family. Bacterial/plant glycogen synthase subfamily.

It catalyses the reaction [(1-&gt;4)-alpha-D-glucosyl](n) + ADP-alpha-D-glucose = [(1-&gt;4)-alpha-D-glucosyl](n+1) + ADP + H(+). It participates in glycan biosynthesis; glycogen biosynthesis. Functionally, synthesizes alpha-1,4-glucan chains using ADP-glucose. This is Glycogen synthase from Pseudomonas fluorescens (strain Pf0-1).